A 105-amino-acid chain; its full sequence is N(4)-acetylcytidine amidohydrolase (105 aa).

Residues 7–93 enclose the ASCH domain; that stretch reads TFFERFEHDI…VIAEIYPGLE (87 aa). Lys-21 functions as the Proton acceptor in the catalytic mechanism. Residue Thr-24 is the Nucleophile of the active site. Glu-74 functions as the Proton donor in the catalytic mechanism.

It belongs to the N(4)-acetylcytidine amidohydrolase family.

The enzyme catalyses N(4)-acetylcytidine + H2O = cytidine + acetate + H(+). The catalysed reaction is N(4)-acetyl-2'-deoxycytidine + H2O = 2'-deoxycytidine + acetate + H(+). It catalyses the reaction N(4)-acetylcytosine + H2O = cytosine + acetate + H(+). Functionally, catalyzes the hydrolysis of N(4)-acetylcytidine (ac4C). The sequence is that of N(4)-acetylcytidine amidohydrolase from Shewanella baltica (strain OS223).